We begin with the raw amino-acid sequence, 744 residues long: Leukocyte immunoglobulin-like receptor subfamily B member 3A (744 aa).

A signal peptide spans 1–24; the sequence is MTFTFTALLCLGLTLGLWIPVLTG. The Extracellular segment spans residues 25–543; that stretch reads SLPKPILRVQ…PPDGLQRYLK (519 aa). Ig-like C2-type domains are found at residues 26–119, 121–221, 223–316, 320–419, and 426–520; these read LPKP…VVTG, YSKP…LVSG, LQKP…VVTG, YHPL…LITG, and FLSV…IVSG. 3 disulfides stabilise this stretch: C49/C98, C144/C197, and C246/C295. N79 carries N-linked (GlcNAc...) asparagine glycosylation. Residue N338 is glycosylated (N-linked (GlcNAc...) asparagine). A disulfide bridge links C343 with C395. The N-linked (GlcNAc...) asparagine glycan is linked to N440. A disulfide bridge links C445 with C496. The helical transmembrane segment at 544 to 564 threads the bilayer; sequence ALIGVSVAFLLFLFILIFILL. Topologically, residues 565 to 744 are cytoplasmic; sequence RRRHQEKFRK…PGAVPKNKKQ (180 aa). Over residues 572 to 584 the composition is skewed to basic and acidic residues; it reads FRKDDEDAQKGKE. 3 disordered regions span residues 572 to 617, 630 to 652, and 667 to 744; these read FRKD…ESLY, ELDTWKPPEGDPQGETYAQVEPS, and EQLN…NKKQ. Positions 615–620 match the ITIM motif 1 motif; the sequence is SLYASV. 2 short sequence motifs (ITIM motif) span residues 695 to 700 and 725 to 730; these read VTYAQL and SVYAAL. A phosphotyrosine; by LYN mark is found at Y697 and Y727.

As to quaternary structure, interacts with LYN, PTPN6/SHP-1 and PTPN11/SHP-2. Post-translationally, phosphorylated on tyrosine residues by LYN. Phosphorylation at Tyr-697 and Tyr-727 is important for interaction with PTPN6/SHP-1 and PTPN11/SHP-2.

The protein resides in the cell membrane. Functionally, may act as receptor for class I MHC antigens. Becomes activated upon coligation with immune receptors, such as FCGR2B and the B-cell receptor. Down-regulates antigen-induced B-cell activation by recruiting phosphatases to its immunoreceptor tyrosine-based inhibitor motifs (ITIM). This is Leukocyte immunoglobulin-like receptor subfamily B member 3A from Rattus norvegicus (Rat).